Here is a 263-residue protein sequence, read N- to C-terminus: Putative TATA-binding protein pB263R (263 aa).

It belongs to the asfivirus B263R family.

In terms of biological role, putative TATA-binding protein. This chain is Putative TATA-binding protein pB263R, found in African swine fever virus (isolate Pig/Kenya/KEN-50/1950) (ASFV).